The sequence spans 169 residues: Peptide deformylase (169 aa).

Cys94 and His136 together coordinate Fe cation. Glu137 is an active-site residue. His140 lines the Fe cation pocket.

This sequence belongs to the polypeptide deformylase family. Fe(2+) is required as a cofactor.

The catalysed reaction is N-terminal N-formyl-L-methionyl-[peptide] + H2O = N-terminal L-methionyl-[peptide] + formate. In terms of biological role, removes the formyl group from the N-terminal Met of newly synthesized proteins. Requires at least a dipeptide for an efficient rate of reaction. N-terminal L-methionine is a prerequisite for activity but the enzyme has broad specificity at other positions. The chain is Peptide deformylase from Desulfotalea psychrophila (strain LSv54 / DSM 12343).